The primary structure comprises 569 residues: TBCC domain-containing protein 1 (569 aa).

One can recognise a C-CAP/cofactor C-like domain in the interval 304-435; the sequence is PRSHRIVVMS…LEDHMARTGL (132 aa).

The protein belongs to the TBCC family.

It localises to the cytoplasm. The protein localises to the cytoskeleton. The protein resides in the microtubule organizing center. Its subcellular location is the centrosome. It is found in the spindle pole. In terms of biological role, plays a role in the regulation of centrosome and Golgi apparatus positioning, with consequences on cell shape and cell migration. This chain is TBCC domain-containing protein 1 (Tbccd1), found in Rattus norvegicus (Rat).